A 515-amino-acid chain; its full sequence is Maturase K (515 aa).

Belongs to the intron maturase 2 family. MatK subfamily.

The protein localises to the plastid. It localises to the chloroplast. Its function is as follows. Usually encoded in the trnK tRNA gene intron. Probably assists in splicing its own and other chloroplast group II introns. This chain is Maturase K, found in Picea mariana (Black spruce).